A 281-amino-acid polypeptide reads, in one-letter code: Pantothenate synthetase (281 aa).

26–33 (MGNLHDGH) contributes to the ATP binding site. Catalysis depends on His33, which acts as the Proton donor. Gln57 is a binding site for (R)-pantoate. Gln57 is a beta-alanine binding site. 145 to 148 (GEKD) serves as a coordination point for ATP. Gln151 provides a ligand contact to (R)-pantoate. 182–185 (MSSR) lines the ATP pocket.

It belongs to the pantothenate synthetase family. Homodimer.

It is found in the cytoplasm. The enzyme catalyses (R)-pantoate + beta-alanine + ATP = (R)-pantothenate + AMP + diphosphate + H(+). It functions in the pathway cofactor biosynthesis; (R)-pantothenate biosynthesis; (R)-pantothenate from (R)-pantoate and beta-alanine: step 1/1. In terms of biological role, catalyzes the condensation of pantoate with beta-alanine in an ATP-dependent reaction via a pantoyl-adenylate intermediate. The polypeptide is Pantothenate synthetase (Idiomarina loihiensis (strain ATCC BAA-735 / DSM 15497 / L2-TR)).